The chain runs to 511 residues: Mannosyl-oligosaccharide alpha-1,2-mannosidase (511 aa).

A signal peptide spans 1–35; it reads MRLPVSFPLTVLSLLGSTIAHPYGETEAVLRSEPK. N-linked (GlcNAc...) asparagine glycosylation occurs at Asn182. Cys332 and Cys361 are joined by a disulfide. An N-linked (GlcNAc...) asparagine glycan is attached at Asn366. Asp375 serves as the catalytic Proton donor. Residue Asn438 is glycosylated (N-linked (GlcNAc...) asparagine). Ca(2+) is bound at residue Thr501.

Belongs to the glycosyl hydrolase 47 family. As to quaternary structure, homodimer. It depends on Ca(2+) as a cofactor.

The protein resides in the secreted. The catalysed reaction is N(4)-(alpha-D-Man-(1-&gt;2)-alpha-D-Man-(1-&gt;2)-alpha-D-Man-(1-&gt;3)-[alpha-D-Man-(1-&gt;2)-alpha-D-Man-(1-&gt;3)-[alpha-D-Man-(1-&gt;2)-alpha-D-Man-(1-&gt;6)]-alpha-D-Man-(1-&gt;6)]-beta-D-Man-(1-&gt;4)-beta-D-GlcNAc-(1-&gt;4)-beta-D-GlcNAc)-L-asparaginyl-[protein] (N-glucan mannose isomer 9A1,2,3B1,2,3) + 4 H2O = N(4)-(alpha-D-Man-(1-&gt;3)-[alpha-D-Man-(1-&gt;3)-[alpha-D-Man-(1-&gt;6)]-alpha-D-Man-(1-&gt;6)]-beta-D-Man-(1-&gt;4)-beta-D-GlcNAc-(1-&gt;4)-beta-D-GlcNAc)-L-asparaginyl-[protein] (N-glucan mannose isomer 5A1,2) + 4 beta-D-mannose. It carries out the reaction N(4)-(alpha-D-Man-(1-&gt;2)-alpha-D-Man-(1-&gt;2)-alpha-D-Man-(1-&gt;3)-[alpha-D-Man-(1-&gt;3)-[alpha-D-Man-(1-&gt;2)-alpha-D-Man-(1-&gt;6)]-alpha-D-Man-(1-&gt;6)]-beta-D-Man-(1-&gt;4)-beta-D-GlcNAc-(1-&gt;4)-beta-D-GlcNAc)-L-asparaginyl-[protein] (N-glucan mannose isomer 8A1,2,3B1,3) + 3 H2O = N(4)-(alpha-D-Man-(1-&gt;3)-[alpha-D-Man-(1-&gt;3)-[alpha-D-Man-(1-&gt;6)]-alpha-D-Man-(1-&gt;6)]-beta-D-Man-(1-&gt;4)-beta-D-GlcNAc-(1-&gt;4)-beta-D-GlcNAc)-L-asparaginyl-[protein] (N-glucan mannose isomer 5A1,2) + 3 beta-D-mannose. The protein operates within protein modification; protein glycosylation. Involved in the maturation of Asn-linked oligosaccharides. Progressively trim alpha-1,2-linked mannose residues from Man(9)GlcNAc(2) to produce Man(5)GlcNAc(2). This is Mannosyl-oligosaccharide alpha-1,2-mannosidase (MSDC) from Penicillium citrinum.